The primary structure comprises 398 residues: Na(+)/H(+) antiporter NhaA (398 aa).

Transmembrane regions (helical) follow at residues 8 to 28 (FLQLEAASGIILFFTAVLALI), 59 to 79 (LLLWINDGLMAIFFLLVGMEI), 96 to 116 (LPVIAAIGGMIVPAAMFSFII), 124 to 144 (AGWAIPMATDIAFALGVLSLL), 154 to 174 (VFLLALAIIDDLGAIMVIALF), 177 to 197 (AELHTIPLLFAVALSAMLLML), 202 to 222 (VMLLTPYLIVGALLWLAVLKS), 223 to 243 (GVHATIAGVILGFAIPHIRGA), 261 to 281 (YFILPFFAFANAGLSFSGLSW), 292 to 312 (IIVGLFIGKPLGVMLVSWLAV), 328 to 348 (LFGLSVLCGIGFTMSIFIGGL), and 362 to 382 (LGILFGSLIAAVFGYILLRNA).

Belongs to the NhaA Na(+)/H(+) (TC 2.A.33) antiporter family.

The protein resides in the cell inner membrane. It catalyses the reaction Na(+)(in) + 2 H(+)(out) = Na(+)(out) + 2 H(+)(in). In terms of biological role, na(+)/H(+) antiporter that extrudes sodium in exchange for external protons. The polypeptide is Na(+)/H(+) antiporter NhaA (Tolumonas auensis (strain DSM 9187 / NBRC 110442 / TA 4)).